Reading from the N-terminus, the 410-residue chain is Multidrug resistance protein MdtA (410 aa).

The N-terminal stretch at 1 to 21 (MNNRYPVMKKGLIVLVVIAVA) is a signal peptide. Residues 36–56 (SDGDLSGQSAHGKRGNGAHKP) are disordered.

It belongs to the membrane fusion protein (MFP) (TC 8.A.1) family. Part of a tripartite efflux system composed of MdtA, MdtB and MdtC.

It localises to the cell inner membrane. The polypeptide is Multidrug resistance protein MdtA (Pantoea ananatis (strain AJ13355)).